The following is a 675-amino-acid chain: Protein C-mannosyl-transferase DPY19L1 (675 aa).

The disordered stretch occupies residues 1-22; the sequence is MEGRPPPEGRPPPRPRTGRAPR. Helical transmembrane passes span 66-88, 156-176, 186-208, 236-254, 260-279, 286-303, 309-325, 334-354, 414-434, 449-469, and 491-511; these read LYYS…WMIM, ACFY…LFFI, LGGL…VMWT, LYRG…FMLP, FVLL…GYID, IIYI…LMFG, TSYY…ILAM, VSEL…TVIL, VVLV…WGVL, GELV…ILIM, and LFGW…ILAA.

Belongs to the dpy-19 family. As to expression, widely expressed.

The protein localises to the endoplasmic reticulum membrane. It catalyses the reaction L-tryptophyl-[protein] + a di-trans,poly-cis-dolichyl beta-D-mannosyl phosphate = C-alpha-D-mannosyl-L-tryptophyl-[protein] + a di-trans,poly-cis-dolichyl phosphate + H(+). It participates in protein modification; protein glycosylation. Its function is as follows. C-mannosyltransferase that mediates the C-mannosylation tryptophan residues on target proteins. The reaction occurs on the luminal side of the endoplasmic reticulum and involves the transfer of a mannose unit from a dolichylphosphate mannose (Dol-P-Man) donor to an acceptor protein containing a WxxW consensus sequence. C-mannosylates the first two tryptophans in the WxxWxxWxxC motif in thrombospondin (TSP) type-1 of UNC5A. Regulates neurite extension during development. The protein is Protein C-mannosyl-transferase DPY19L1 (DPY19L1) of Homo sapiens (Human).